The primary structure comprises 204 residues: GATA transcription factor 14 (204 aa).

The span at 57–66 shows a compositional bias: basic and acidic residues; that stretch reads REFDTNDSKP. Residues 57–102 form a disordered region; it reads REFDTNDSKPSRNFSNLPTATRGRLHAPKRSGNKRGRQKRLSFKSP. The segment covering 79 to 98 has biased composition (basic residues); it reads GRLHAPKRSGNKRGRQKRLS. Residues 111–165 form a GATA-type zinc finger; sequence GITDKSCSHCGTRKTPLWREGPRGAGTLCNACGMRYRTGRLLPEYRPASSPDFKP. The tract at residues 180–204 is disordered; that stretch reads RERKSSPPNSFGFSESYHSTRKLGF. Residues 185–196 show a composition bias toward polar residues; the sequence is SPPNSFGFSESY.

The protein belongs to the type IV zinc-finger family. Class A subfamily.

It is found in the nucleus. In terms of biological role, transcriptional activator that specifically binds 5'-GATA-3' or 5'-GAT-3' motifs within gene promoters. May be involved in the regulation of some light-responsive genes. The chain is GATA transcription factor 14 (GATA14) from Arabidopsis thaliana (Mouse-ear cress).